The chain runs to 493 residues: Glutamate--tRNA ligase (493 aa).

Positions 10 to 20 (PSPTGDPHVGT) match the 'HIGH' region motif. The Zn(2+) site is built by Cys-107, Cys-109, Cys-134, and His-136. The short motif at 251–255 (KLSKR) is the 'KMSKS' region element. An ATP-binding site is contributed by Lys-254.

It belongs to the class-I aminoacyl-tRNA synthetase family. Glutamate--tRNA ligase type 1 subfamily. Monomer. Zn(2+) is required as a cofactor.

It is found in the cytoplasm. The enzyme catalyses tRNA(Glu) + L-glutamate + ATP = L-glutamyl-tRNA(Glu) + AMP + diphosphate. In terms of biological role, catalyzes the attachment of glutamate to tRNA(Glu) in a two-step reaction: glutamate is first activated by ATP to form Glu-AMP and then transferred to the acceptor end of tRNA(Glu). This chain is Glutamate--tRNA ligase, found in Stutzerimonas stutzeri (strain A1501) (Pseudomonas stutzeri).